We begin with the raw amino-acid sequence, 279 residues long: Ribosomal RNA small subunit methyltransferase A (279 aa).

The S-adenosyl-L-methionine site is built by histidine 12, leucine 14, glycine 39, glutamate 60, aspartate 81, and asparagine 118.

Belongs to the class I-like SAM-binding methyltransferase superfamily. rRNA adenine N(6)-methyltransferase family. RsmA subfamily.

It localises to the cytoplasm. It catalyses the reaction adenosine(1518)/adenosine(1519) in 16S rRNA + 4 S-adenosyl-L-methionine = N(6)-dimethyladenosine(1518)/N(6)-dimethyladenosine(1519) in 16S rRNA + 4 S-adenosyl-L-homocysteine + 4 H(+). Its function is as follows. Specifically dimethylates two adjacent adenosines (A1518 and A1519) in the loop of a conserved hairpin near the 3'-end of 16S rRNA in the 30S particle. May play a critical role in biogenesis of 30S subunits. This Polaromonas naphthalenivorans (strain CJ2) protein is Ribosomal RNA small subunit methyltransferase A.